We begin with the raw amino-acid sequence, 232 residues long: Large ribosomal subunit protein uL1 (232 aa).

This sequence belongs to the universal ribosomal protein uL1 family. As to quaternary structure, part of the 50S ribosomal subunit.

In terms of biological role, binds directly to 23S rRNA. The L1 stalk is quite mobile in the ribosome, and is involved in E site tRNA release. Functionally, protein L1 is also a translational repressor protein, it controls the translation of the L11 operon by binding to its mRNA. The protein is Large ribosomal subunit protein uL1 of Burkholderia vietnamiensis (strain G4 / LMG 22486) (Burkholderia cepacia (strain R1808)).